The sequence spans 375 residues: Actin-binding Rho-activating protein (375 aa).

The interval 37–101 is disordered; that stretch reads ANENSTRQAQ…ATEVSHIKRK (65 aa). The segment covering 80–101 has biased composition (basic and acidic residues); that stretch reads PDGDREGRGSEEATEVSHIKRK. Phosphoserine occurs at positions 150 and 182. A disordered region spans residues 175-197; the sequence is EPKWKSDSIDTEDSGYGGDMEER. Actin-binding regions lie at residues 193–293 and 294–375; these read DMEE…AERA and KRAE…TLLE. Interaction with actin regions lie at residues 234-279 and 346-375; these read SQVD…GDEG and MRAR…TLLE.

Binds F-actin and ABLIM1, ABLIM2 and ABLIM3. Interaction with ABLIM2 and ABLIM3 enhances activity. Predominantly expressed in heart and skeletal muscle, and expressed at lower levels in adrenal gland, brain, kidney, liver, and testis.

The protein resides in the cytoplasm. It localises to the myofibril. The protein localises to the sarcomere. Its subcellular location is the cytoskeleton. Its function is as follows. Acts as an activator of serum response factor (SRF)-dependent transcription possibly by inducing nuclear translocation of MKL1 or MKL2 and through a mechanism requiring Rho-actin signaling. The chain is Actin-binding Rho-activating protein from Rattus norvegicus (Rat).